Here is a 177-residue protein sequence, read N- to C-terminus: ADP-ribosylation factor-like protein 3 (177 aa).

Gly2 carries the N-myristoyl glycine lipid modification. GTP is bound by residues 23 to 31 (GLDNAGKTT), 125 to 128 (NKQD), and Ala159.

Belongs to the small GTPase superfamily. Arf family.

It is found in the golgi apparatus membrane. The protein localises to the cytoplasm. The protein resides in the cytoskeleton. It localises to the spindle. Its subcellular location is the nucleus. It is found in the microtubule organizing center. Its function is as follows. Small GTP-binding protein which cycles between an inactive GDP-bound and an active GTP-bound form, and the rate of cycling is regulated by guanine nucleotide exchange factors (GEF) and GTPase-activating proteins (GAP). Required for normal cytokinesis and cilia signaling. Required for targeting proteins to the ciliary membrane by releasing myristoylated protein from unc119 cargo adapters into the cilium. The polypeptide is ADP-ribosylation factor-like protein 3 (Chlamydomonas reinhardtii (Chlamydomonas smithii)).